The following is a 106-amino-acid chain: UPF0145 protein PFL_3418 (106 aa).

The protein belongs to the UPF0145 family.

The protein is UPF0145 protein PFL_3418 of Pseudomonas fluorescens (strain ATCC BAA-477 / NRRL B-23932 / Pf-5).